The following is a 969-amino-acid chain: RNA polymerase-associated protein RapA (969 aa).

One can recognise a Helicase ATP-binding domain in the interval 164-334 (EVGRRHAPRV…FARLRLLDPD (171 aa)). ATP is bound at residue 177-184 (DEVGLGKT). The short motif at 280-283 (DEAH) is the DEAH box element. The Helicase C-terminal domain occupies 492-679 (RVNWLIEKIQ…ESAKLNQSLK (188 aa)).

The protein belongs to the SNF2/RAD54 helicase family. RapA subfamily. In terms of assembly, interacts with the RNAP. Has a higher affinity for the core RNAP than for the holoenzyme. Its ATPase activity is stimulated by binding to RNAP.

Functionally, transcription regulator that activates transcription by stimulating RNA polymerase (RNAP) recycling in case of stress conditions such as supercoiled DNA or high salt concentrations. Probably acts by releasing the RNAP, when it is trapped or immobilized on tightly supercoiled DNA. Does not activate transcription on linear DNA. Probably not involved in DNA repair. This Vibrio atlanticus (strain LGP32) (Vibrio splendidus (strain Mel32)) protein is RNA polymerase-associated protein RapA.